The chain runs to 408 residues: Snake venom 5'-nucleotidase (408 aa).

Positions 54 and 77 each coordinate Zn(2+). N-linked (GlcNAc...) asparagine glycosylation is found at asparagine 167 and asparagine 181. Intrachain disulfides connect cysteine 187–cysteine 192 and cysteine 199–cysteine 221. Arginine 188 contacts AMP. AMP is bound by residues asparagine 224, arginine 229, and phenylalanine 252. The cysteines at positions 311 and 314 are disulfide-linked. AMP is bound by residues phenylalanine 335 and aspartate 341. Propeptides (removed in mature form) lie at residues 385–388 and 385–408; these read DGTL and DGTL…FFIL.

This sequence belongs to the 5'-nucleotidase family. In terms of assembly, homodimer. In terms of processing, venom 5'-nucleotidases (or a part thereof) may be released into the venom via exosome-like vesicles. They may be attached via a GPI anchor to the membrane of these vesicles. Soluble forms of 5'-nucleotidase might be released by cleavage of the ectodomain in the exosome-like vesicles or venom gland cells. As to expression, expressed by the venom gland.

The protein localises to the membrane. It carries out the reaction a ribonucleoside 5'-phosphate + H2O = a ribonucleoside + phosphate. It catalyses the reaction AMP + H2O = adenosine + phosphate. The catalysed reaction is GMP + H2O = guanosine + phosphate. The enzyme catalyses ADP + H2O = AMP + phosphate + H(+). Its activity is regulated as follows. Is potently inhibited by metal ions Fe(3+), Cu(2+) and Zn(2+). Is enhanced by Mn(2+). Ca(2+) and Mg(2+) have no effect. Its function is as follows. Hydrolyzes nucleotides into nucleosides. Prefers AMP as the substrate but also cleaves GMP and ADP. Does not affect AMP, cAMP and cGMP. Inhibits ADP- and collagen-induced platelet aggregation. Snake venom 5'-nucleotidases are widely distributed among venomous snake taxa, but there is a lack of information about their biological activities. They have been shown to inhibit platelet aggregation. This effect may be due to the liberation of inhibitory AMP or adenosine by its action on ADP released upon initiation of aggregation. Venom 5'-nucleotidases are also known to synergistically act in vivo with other toxins like ADPases, phospholipases, and disintegrins to exert a more pronounced anti-coagulant effect. The chain is Snake venom 5'-nucleotidase from Macrovipera lebetinus (Levantine viper).